The chain runs to 968 residues: RNA polymerase-associated protein RapA (968 aa).

In terms of domain architecture, Helicase ATP-binding spans 164–334; that stretch reads DVGRRHAPRV…FARLRLLDPN (171 aa). Residue 177 to 184 participates in ATP binding; it reads DEVGLGKT. The DEAH box signature appears at 280-283; sequence DEAH. Residues 490 to 685 form the Helicase C-terminal domain; sequence RVEWLMGYLT…ALKAQLEQGR (196 aa).

Belongs to the SNF2/RAD54 helicase family. RapA subfamily. Interacts with the RNAP. Has a higher affinity for the core RNAP than for the holoenzyme. Its ATPase activity is stimulated by binding to RNAP.

Functionally, transcription regulator that activates transcription by stimulating RNA polymerase (RNAP) recycling in case of stress conditions such as supercoiled DNA or high salt concentrations. Probably acts by releasing the RNAP, when it is trapped or immobilized on tightly supercoiled DNA. Does not activate transcription on linear DNA. Probably not involved in DNA repair. This Salmonella typhi protein is RNA polymerase-associated protein RapA.